The primary structure comprises 138 residues: Small ribosomal subunit protein bS6 (138 aa).

A disordered region spans residues 94–138; that stretch reads VKQDGPLPTPKPTSKENEPEKEEVKPTEEKTESPSKDEKKEDSKE. Residues 106–138 show a composition bias toward basic and acidic residues; the sequence is TSKENEPEKEEVKPTEEKTESPSKDEKKEDSKE.

Belongs to the bacterial ribosomal protein bS6 family.

Binds together with bS18 to 16S ribosomal RNA. The polypeptide is Small ribosomal subunit protein bS6 (Prochlorococcus marinus (strain NATL2A)).